The primary structure comprises 223 residues: Deoxyribose-phosphate aldolase (223 aa).

D89 acts as the Proton donor/acceptor in catalysis. K152 serves as the catalytic Schiff-base intermediate with acetaldehyde. K181 (proton donor/acceptor) is an active-site residue.

Belongs to the DeoC/FbaB aldolase family. DeoC type 1 subfamily.

It is found in the cytoplasm. The enzyme catalyses 2-deoxy-D-ribose 5-phosphate = D-glyceraldehyde 3-phosphate + acetaldehyde. Its pathway is carbohydrate degradation; 2-deoxy-D-ribose 1-phosphate degradation; D-glyceraldehyde 3-phosphate and acetaldehyde from 2-deoxy-alpha-D-ribose 1-phosphate: step 2/2. In terms of biological role, catalyzes a reversible aldol reaction between acetaldehyde and D-glyceraldehyde 3-phosphate to generate 2-deoxy-D-ribose 5-phosphate. This chain is Deoxyribose-phosphate aldolase, found in Listeria monocytogenes serovar 1/2a (strain ATCC BAA-679 / EGD-e).